We begin with the raw amino-acid sequence, 1379 residues long: DNA-directed RNA polymerase subunit beta (1379 aa).

Belongs to the RNA polymerase beta chain family. In plastids the minimal PEP RNA polymerase catalytic core is composed of four subunits: alpha, beta, beta', and beta''. When a (nuclear-encoded) sigma factor is associated with the core the holoenzyme is formed, which can initiate transcription.

The protein resides in the plastid. It is found in the chloroplast. The catalysed reaction is RNA(n) + a ribonucleoside 5'-triphosphate = RNA(n+1) + diphosphate. DNA-dependent RNA polymerase catalyzes the transcription of DNA into RNA using the four ribonucleoside triphosphates as substrates. This Trieres chinensis (Marine centric diatom) protein is DNA-directed RNA polymerase subunit beta.